The chain runs to 205 residues: Small ribosomal subunit protein uS4c (205 aa).

In terms of domain architecture, S4 RNA-binding spans 93 to 156 (MRLDNTVFRL…KSRNLVLNNL (64 aa)).

This sequence belongs to the universal ribosomal protein uS4 family. Part of the 30S ribosomal subunit. Contacts protein S5. The interaction surface between S4 and S5 is involved in control of translational fidelity.

The protein resides in the plastid. The protein localises to the chloroplast. Its function is as follows. One of the primary rRNA binding proteins, it binds directly to 16S rRNA where it nucleates assembly of the body of the 30S subunit. Functionally, with S5 and S12 plays an important role in translational accuracy. The sequence is that of Small ribosomal subunit protein uS4c (rps4) from Mesostigma viride (Green alga).